The following is an 854-amino-acid chain: Alkaline phosphatase-like protein PglZ (854 aa).

This sequence belongs to the alkaline phosphatase superfamily.

Functionally, BREX systems (bacteriophage exclusion) provide immunity against bacteriophage. A core protein of a type 1 BREX system. This system allows phage adsorption but prevents phage DNA replication, without degradation of the phage DNA. Methylation of bacterial DNA by PglX probably guides self/non-self discrimination. When the brxA-brxB-brxC-pglX and pglZ-brxL operons are transformed into a susceptible B.subtilis strain (BEST7003) they confer resistance to bacteriophages SPbeta, SP16, Zeta, phi3T and SP02 and partial protection to phages SP01 and SP82G (these include lytic and temperate phage). They do not protect against phages phi105, rho10 or rho14. Additionally confers a very slight reduction in efficiency of plasmid transformation. The sequence is that of Alkaline phosphatase-like protein PglZ from Bacillus cereus (strain H3081.97).